An 86-amino-acid polypeptide reads, in one-letter code: Exodeoxyribonuclease 7 small subunit (86 aa).

The tract at residues 1 to 26 (MQDELFETEKIPPKNTKNTKNAPKKS) is disordered.

The protein belongs to the XseB family. Heterooligomer composed of large and small subunits.

The protein resides in the cytoplasm. The catalysed reaction is Exonucleolytic cleavage in either 5'- to 3'- or 3'- to 5'-direction to yield nucleoside 5'-phosphates.. Functionally, bidirectionally degrades single-stranded DNA into large acid-insoluble oligonucleotides, which are then degraded further into small acid-soluble oligonucleotides. The protein is Exodeoxyribonuclease 7 small subunit of Helicobacter pylori (strain ATCC 700392 / 26695) (Campylobacter pylori).